We begin with the raw amino-acid sequence, 82 residues long: ATP synthase subunit c (82 aa).

2 helical membrane passes run 7–27 and 53–73; these read FVALAAGLIIGLGAVGACIGI and FLLAGLIDAAFLIGVGIAMMF.

The protein belongs to the ATPase C chain family. As to quaternary structure, F-type ATPases have 2 components, F(1) - the catalytic core - and F(0) - the membrane proton channel. F(1) has five subunits: alpha(3), beta(3), gamma(1), delta(1), epsilon(1). F(0) has three main subunits: a(1), b(2) and c(10-14). The alpha and beta chains form an alternating ring which encloses part of the gamma chain. F(1) is attached to F(0) by a central stalk formed by the gamma and epsilon chains, while a peripheral stalk is formed by the delta and b chains.

The protein localises to the cell inner membrane. F(1)F(0) ATP synthase produces ATP from ADP in the presence of a proton or sodium gradient. F-type ATPases consist of two structural domains, F(1) containing the extramembraneous catalytic core and F(0) containing the membrane proton channel, linked together by a central stalk and a peripheral stalk. During catalysis, ATP synthesis in the catalytic domain of F(1) is coupled via a rotary mechanism of the central stalk subunits to proton translocation. Its function is as follows. Key component of the F(0) channel; it plays a direct role in translocation across the membrane. A homomeric c-ring of between 10-14 subunits forms the central stalk rotor element with the F(1) delta and epsilon subunits. The protein is ATP synthase subunit c of Polaromonas sp. (strain JS666 / ATCC BAA-500).